Consider the following 366-residue polypeptide: Putative actin-9 (366 aa).

This sequence belongs to the actin family. Polymerization of globular actin (G-actin) leads to a structural filament (F-actin) in the form of a two-stranded helix. The binding of profilin to monomeric G-actin cause the sequestration of actin into profilactin complexes, and prevents the polymerization.

The protein localises to the cytoplasm. Its subcellular location is the cytoskeleton. In terms of biological role, actins are highly conserved proteins that are involved in various types of cell motility and are ubiquitously expressed in all eukaryotic cells. Essential component of cell cytoskeleton; plays an important role in cytoplasmic streaming, cell shape determination, cell division, organelle movement and extension growth. In Arabidopsis thaliana (Mouse-ear cress), this protein is Putative actin-9 (ACT9).